The sequence spans 423 residues: Adenylosuccinate synthetase (423 aa).

GTP contacts are provided by residues 12-18 (GDEGKGK) and 40-42 (GHT). Residue Asp-13 is the Proton acceptor of the active site. Residues Asp-13 and Gly-40 each coordinate Mg(2+). IMP contacts are provided by residues 13–16 (DEGK), 38–41 (NAGH), Thr-128, Arg-142, Gln-223, Thr-238, and Arg-302. Residue His-41 is the Proton donor of the active site. A substrate-binding site is contributed by 298–304 (TTTGRPR). GTP-binding positions include Arg-304, 330–332 (RLD), and 412–414 (CIG).

It belongs to the adenylosuccinate synthetase family. In terms of assembly, homodimer. Mg(2+) serves as cofactor.

Its subcellular location is the cytoplasm. The catalysed reaction is IMP + L-aspartate + GTP = N(6)-(1,2-dicarboxyethyl)-AMP + GDP + phosphate + 2 H(+). The protein operates within purine metabolism; AMP biosynthesis via de novo pathway; AMP from IMP: step 1/2. Its function is as follows. Plays an important role in the de novo pathway of purine nucleotide biosynthesis. Catalyzes the first committed step in the biosynthesis of AMP from IMP. In Dehalococcoides mccartyi (strain ATCC BAA-2266 / KCTC 15142 / 195) (Dehalococcoides ethenogenes (strain 195)), this protein is Adenylosuccinate synthetase.